The primary structure comprises 842 residues: Amyloid-beta A4 precursor protein-binding family A member 1 (842 aa).

Disordered stretches follow at residues M1 to A121, R238 to D349, and K366 to R439. Phosphoserine is present on S82. Basic and acidic residues-rich tracts occupy residues D106 to D115 and H240 to E258. 6 positions are modified to phosphoserine: S246, S250, S252, S267, S284, and S289. The residue at position 309 (T309) is a Phosphothreonine. 2 positions are modified to phosphoserine: S317 and S372. T375 carries the phosphothreonine modification. Over residues P392–D403 the composition is skewed to basic and acidic residues. Residues G404–S421 show a composition bias toward low complexity. A phosphoserine mark is found at S406, S408, S413, and S573. The PID domain maps to L460–D648. An autoinhibitory helix linker region spans residues L631 to D648. PDZ domains are found at residues D661–R746 and T752–A828.

As to quaternary structure, part of a multimeric complex containing STXBP1 and STX1A. Interacts with STXBP1. Component of the brain-specific heterotrimeric complex (LIN-10-LIN-2-LIN-7 complex) composed of at least APBA1, CASK, and LIN7, which associates with the motor protein KIF17 to transport vesicles along microtubules. Within the complex, interacts (via PDZ domain) with the motor protein KIF17; the interaction is direct and is required for association of KIF17 with the cargo that is to be transported. Binds to the cytoplasmic domain of amyloid protein (APP). Interacts (via PDZ 1 and 2 domains) with FSPB. Isoform 3 interacts (via its truncated PID domain) with active, GTP-bound RAB6A. Also interacts with GTP-bound RAB6B. As to expression, isoform 3 is expressed in brain.

The protein localises to the cytoplasm. It localises to the perinuclear region. Its subcellular location is the nucleus. The protein resides in the golgi apparatus. In terms of biological role, putative function in synaptic vesicle exocytosis by binding to Munc18-1, an essential component of the synaptic vesicle exocytotic machinery. May modulate processing of the amyloid-beta precursor protein (APP) and hence formation of AAP-beta. Component of the LIN-10-LIN-2-LIN-7 complex, which associates with the motor protein KIF17 to transport vesicles containing N-methyl-D-aspartate (NMDA) receptor subunit NR2B along microtubules. The polypeptide is Amyloid-beta A4 precursor protein-binding family A member 1 (Mus musculus (Mouse)).